The following is a 104-amino-acid chain: Small ribosomal subunit protein uS10 (104 aa).

It belongs to the universal ribosomal protein uS10 family. Part of the 30S ribosomal subunit.

Involved in the binding of tRNA to the ribosomes. This Alkaliphilus metalliredigens (strain QYMF) protein is Small ribosomal subunit protein uS10.